The following is a 129-amino-acid chain: 3-aminoacrylate deaminase RutC (129 aa).

Belongs to the RutC family.

The catalysed reaction is (Z)-3-aminoacrylate + H2O + H(+) = 3-oxopropanoate + NH4(+). Functionally, involved in pyrimidine catabolism. Catalyzes the deamination of 3-aminoacrylate to malonic semialdehyde, a reaction that can also occur spontaneously. RutC may facilitate the reaction and modulate the metabolic fitness, rather than catalyzing essential functions. The protein is 3-aminoacrylate deaminase RutC of Caulobacter vibrioides (strain ATCC 19089 / CIP 103742 / CB 15) (Caulobacter crescentus).